Reading from the N-terminus, the 831-residue chain is Periplasmic nitrate reductase (831 aa).

A signal peptide (tat-type signal) is located at residues 1–29; it reads MTVTRRDFVRHQALATAAAAAGVAVPAAA. Positions 41-97 constitute a 4Fe-4S Mo/W bis-MGD-type domain; that stretch reads LVWSKAPCRFCGTGCSVNVATKEGRVVATHGDIKSPVNRGLNCVKGYFLSKVMYGED. The [4Fe-4S] cluster site is built by cysteine 48, cysteine 51, cysteine 55, and cysteine 83. Mo-bis(molybdopterin guanine dinucleotide) contacts are provided by residues lysine 85, glutamine 152, asparagine 177, cysteine 181, 214–221, 245–249, 264–266, methionine 375, glutamine 379, asparagine 485, 511–512, lysine 534, aspartate 561, and 721–730; these read WGSNMAEM, STYEH, QSD, SD, and TGRVIEHWHS. A substrate-binding site is contributed by tryptophan 797. The Mo-bis(molybdopterin guanine dinucleotide) site is built by asparagine 805 and lysine 822.

Belongs to the prokaryotic molybdopterin-containing oxidoreductase family. NasA/NapA/NarB subfamily. As to quaternary structure, component of the periplasmic nitrate reductase NapAB complex composed of NapA and NapB. Requires [4Fe-4S] cluster as cofactor. It depends on Mo-bis(molybdopterin guanine dinucleotide) as a cofactor. In terms of processing, predicted to be exported by the Tat system. The position of the signal peptide cleavage has not been experimentally proven.

It localises to the periplasm. It carries out the reaction 2 Fe(II)-[cytochrome] + nitrate + 2 H(+) = 2 Fe(III)-[cytochrome] + nitrite + H2O. Functionally, catalytic subunit of the periplasmic nitrate reductase complex NapAB. Receives electrons from NapB and catalyzes the reduction of nitrate to nitrite. This chain is Periplasmic nitrate reductase, found in Saccharophagus degradans (strain 2-40 / ATCC 43961 / DSM 17024).